The chain runs to 472 residues: Ribulose bisphosphate carboxylase large chain (472 aa).

Residues Asn120 and Thr170 each coordinate substrate. Catalysis depends on Lys172, which acts as the Proton acceptor. Lys174 is a binding site for substrate. Mg(2+)-binding residues include Lys198, Asp200, and Glu201. At Lys198 the chain carries N6-carboxylysine. His291 serves as the catalytic Proton acceptor. Residues Arg292, His324, and Ser376 each contribute to the substrate site. Positions 461–467 match the Interacts with RbcX2 motif; that stretch reads EIKFEFE.

It belongs to the RuBisCO large chain family. Type I subfamily. In terms of assembly, heterohexadecamer of 8 large chains and 8 small chains; disulfide-linked. The disulfide link is formed within the large subunit homodimers. The exposed C-terminus binds in a cleft in the RbcX2 (shown with endogenous and Anabaena strain CA protein). RbcX2 is displaced by RbcS; as RbcX2 is removed RbcS mediates the ordering of an internal RbcL loop (Thr-64-Leu-70) in a catalytically active conformation. It depends on Mg(2+) as a cofactor. Post-translationally, the disulfide bond which can form in the large chain dimeric partners within the hexadecamer appears to be associated with oxidative stress and protein turnover.

It localises to the carboxysome. The enzyme catalyses 2 (2R)-3-phosphoglycerate + 2 H(+) = D-ribulose 1,5-bisphosphate + CO2 + H2O. It carries out the reaction D-ribulose 1,5-bisphosphate + O2 = 2-phosphoglycolate + (2R)-3-phosphoglycerate + 2 H(+). RuBisCO catalyzes two reactions: the carboxylation of D-ribulose 1,5-bisphosphate, the primary event in carbon dioxide fixation, as well as the oxidative fragmentation of the pentose substrate in the photorespiration process. Both reactions occur simultaneously and in competition at the same active site. The chain is Ribulose bisphosphate carboxylase large chain (cbbL) from Synechococcus sp. (strain ATCC 27144 / PCC 6301 / SAUG 1402/1) (Anacystis nidulans).